The primary structure comprises 86 residues: Photosystem I reaction center subunit PsaK 1 (86 aa).

The next 2 membrane-spanning stretches (helical) occupy residues Leu14 to Phe34 and Ala61 to Ala81.

This sequence belongs to the PsaG/PsaK family.

The protein resides in the cellular thylakoid membrane. In Synechocystis sp. (strain ATCC 27184 / PCC 6803 / Kazusa), this protein is Photosystem I reaction center subunit PsaK 1 (psaK1).